Here is a 142-residue protein sequence, read N- to C-terminus: Nucleoside diphosphate kinase (142 aa).

Residues Lys11, Phe59, Arg87, Thr93, Arg104, and Asn114 each coordinate ATP. The active-site Pros-phosphohistidine intermediate is the His117.

This sequence belongs to the NDK family. Homotetramer. Mg(2+) serves as cofactor.

Its subcellular location is the cytoplasm. The catalysed reaction is a 2'-deoxyribonucleoside 5'-diphosphate + ATP = a 2'-deoxyribonucleoside 5'-triphosphate + ADP. The enzyme catalyses a ribonucleoside 5'-diphosphate + ATP = a ribonucleoside 5'-triphosphate + ADP. Functionally, major role in the synthesis of nucleoside triphosphates other than ATP. The ATP gamma phosphate is transferred to the NDP beta phosphate via a ping-pong mechanism, using a phosphorylated active-site intermediate. This is Nucleoside diphosphate kinase from Aeromonas hydrophila subsp. hydrophila (strain ATCC 7966 / DSM 30187 / BCRC 13018 / CCUG 14551 / JCM 1027 / KCTC 2358 / NCIMB 9240 / NCTC 8049).